Consider the following 256-residue polypeptide: MELLQGKTFVVMGVANQRSIAWGIARSLHNAGAKLIFTYAGERLERNVRELADTLEGQESLVLPCDVTNDEELTACFETIKQEVGTIHGVAHCIAFANRDDLKGEFVDTSRDGFLLAQNISAFSLTAVAREAKKVMTEGGNILTLTYLGGERVVKNYNVMGVAKASLEASVKYLANDLGQHGIRVNAISAGPIRTLSAKGVGDFNSILREIEERAPLRRTTTQEEVGDTAVFLFSDLARGVTGENIHVDSGYHILG.

Residues Gly13, 19–20 (SI), 66–67 (DV), and Ile94 each bind NAD(+). Ala97 serves as a coordination point for substrate. Catalysis depends on proton acceptor residues Tyr147 and Tyr157. Residues Lys164 and 193–197 (IRTLS) each bind NAD(+).

It belongs to the short-chain dehydrogenases/reductases (SDR) family. FabI subfamily. As to quaternary structure, homotetramer.

The enzyme catalyses a 2,3-saturated acyl-[ACP] + NAD(+) = a (2E)-enoyl-[ACP] + NADH + H(+). It participates in lipid metabolism; fatty acid biosynthesis. Its function is as follows. Catalyzes the reduction of a carbon-carbon double bond in an enoyl moiety that is covalently linked to an acyl carrier protein (ACP). Involved in the elongation cycle of fatty acid which are used in the lipid metabolism. This chain is Enoyl-[acyl-carrier-protein] reductase [NADH] FabI (fabI), found in Bacillus cereus (strain ATCC 14579 / DSM 31 / CCUG 7414 / JCM 2152 / NBRC 15305 / NCIMB 9373 / NCTC 2599 / NRRL B-3711).